The chain runs to 257 residues: Type I iodothyronine deiodinase (257 aa).

Residues 1–12 (MGLPGLGLLLKR) lie on the Extracellular side of the membrane. Residues 13–33 (FGVLVRVALKVAVGKVLLTLW) traverse the membrane as a helical; Signal-anchor for type III membrane protein segment. The Cytoplasmic segment spans residues 34 to 257 (PSAIRPHLLA…CRSSAQSPRL (224 aa)). U126 is a catalytic residue. Residue U126 is a non-standard amino acid, selenocysteine.

It belongs to the iodothyronine deiodinase family. In terms of assembly, predominantly monomer. Can form homodimers but homodimerization is not essential for enzyme activity. As to expression, liver specific.

The protein localises to the cell membrane. Its subcellular location is the endoplasmic reticulum membrane. It localises to the basolateral cell membrane. It catalyses the reaction 3,3',5-triiodo-L-thyronine + iodide + A + H(+) = L-thyroxine + AH2. The catalysed reaction is 3,3',5'-triiodo-L-thyronine + iodide + A + H(+) = L-thyroxine + AH2. It carries out the reaction 3,3'-diiodo-L-thyronine + iodide + A + H(+) = 3,3',5'-triiodo-L-thyronine + AH2. The enzyme catalyses 3,3'-diiodo-L-thyronine + iodide + A + H(+) = 3,3',5-triiodo-L-thyronine + AH2. It catalyses the reaction 3'-iodo-L-thyronine + iodide + A + H(+) = 3',5'-diiodo-L-thyronine + AH2. The catalysed reaction is 3-iodo-L-thyronine + iodide + A + H(+) = 3,5-diiodo-L-thyronine + AH2. It carries out the reaction 3-iodo-L-thyronine + iodide + A + H(+) = 3,3'-diiodo-L-thyronine + AH2. The enzyme catalyses 3,3'-diiodothyronamine + iodide + A + H(+) = 3,3',5'-triiodothyronamine + AH2. It catalyses the reaction 3'-iodothyronamine + iodide + A + H(+) = 3',5'-diiodothyronamine + AH2. The catalysed reaction is 3-iodothyronamine + iodide + A + H(+) = 3,3'-diiodothyronamine + AH2. It carries out the reaction 3,3'-diiodothyronamine + iodide + A + H(+) = 3,3',5-triiodothyronamine + AH2. The enzyme catalyses 3-iodothyronamine + iodide + A + H(+) = 3,5-diiodothyronamine + AH2. It catalyses the reaction 3,3'-diiodo-L-thyronine sulfate + iodide + A + H(+) = 3,3',5'-triiodo-L-thyronine sulfate + AH2. The catalysed reaction is 3,3',5'-triiodo-L-thyronine sulfate + iodide + A + H(+) = L-thyroxine sulfate + AH2. It carries out the reaction 3,3'-diiodo-L-thyronine sulfate + iodide + A + H(+) = 3,3',5-triiodo-L-thyronine sulfate + AH2. In terms of biological role, plays a crucial role in the metabolism of thyroid hormones (TH) and has specific roles in TH activation and inactivation by deiodination. Catalyzes the deiodination of L-thyroxine (T4) to 3,5,3'-triiodothyronine (T3) and 3',5'-diiodothyronine (3',5'-T2) to 3'-monoiodothyronine (3'-T1) via outer-ring deiodination (ORD). Catalyzes the deiodination of T4 to 3,3',5'-triiodothyronine (rT3), T3 to 3,3'-diiodothyronine (3,3'-T2), 3,5-diiodothyronine (3,5-T2) to 3-monoiodothyronine (3-T1) and 3,3'-T2 to 3-T1 via inner-ring deiodination (IRD). Catalyzes the deiodination of rT3 to 3,3'-T2 via ORD. Catalyzes the phenolic ring deiodinations of 3,3',5'-triiodothyronamine, 3',5'-diiodothyronamine and 3,3'-diiodothyronamine as well as tyrosyl ring deiodinations of 3,5,3'-triiodothyronamine and 3,5-diiodothyronamine. Catalyzes the deiodination of L-thyroxine sulfate and 3,3',5-triiodo-L-thyronine sulfate via IRD and of 3,3',5'-triiodo-L-thyronine sulfate via ORD. The chain is Type I iodothyronine deiodinase (DIO1) from Suncus murinus (Asian house shrew).